A 387-amino-acid polypeptide reads, in one-letter code: V-set and immunoglobulin domain-containing protein 1 (387 aa).

The first 21 residues, 1 to 21, serve as a signal peptide directing secretion; sequence MVFAFWKVFLILSCLAGQVSV. Residues 22-132 form the Ig-like V-type domain; that stretch reads VQVTIPDGFV…DFLGQNQGIL (111 aa). Over 22-232 the chain is Extracellular; it reads VQVTIPDGFV…EIDLTSSHPE (211 aa). N-linked (GlcNAc...) asparagine glycans are attached at residues Asn-32 and Asn-38. A disulfide bond links Cys-43 and Cys-116. Residues Asn-133, Asn-200, and Asn-219 are each glycosylated (N-linked (GlcNAc...) asparagine). Positions 140–227 constitute an Ig-like C2-type domain; that stretch reads PSKPLCSVQG…GNSSCEIDLT (88 aa). Cys-161 and Cys-211 are disulfide-bonded. The helical transmembrane segment at 233–253 threads the bilayer; that stretch reads VGIIVGALIGSLVGAAIIISV. Topologically, residues 254–387 are cytoplasmic; sequence VCFARNKAKA…SEDEKGVVKA (134 aa). The segment at 266-387 is disordered; sequence KERNSKTIAE…SEDEKGVVKA (122 aa). A compositionally biased stretch (basic and acidic residues) spans 284 to 296; that stretch reads PRGESEAMPREDA. Residues 299-308 show a composition bias toward polar residues; the sequence is LEVTLPSSIH. The span at 325-335 shows a compositional bias: pro residues; sequence TQEPAPEPAPG. Acidic residues predominate over residues 344–368; that stretch reads LDIELELEPETQSELEPEPEPEPES.

Post-translationally, highly N-glycosylated. Appears not to contain significant amounts of O-linked carbohydrates or sialic acid in its sugar moieties. As to expression, detected only in stomach mucosa and testis, and to a much lesser level in pancreas (at protein level). Detected in gastric cancers (31%), esophageal carcinomas (50%) and ovarian cancers (23%).

It localises to the membrane. This is V-set and immunoglobulin domain-containing protein 1 (VSIG1) from Homo sapiens (Human).